The sequence spans 521 residues: Apolipoprotein N-acyltransferase (521 aa).

Transmembrane regions (helical) follow at residues 24–44 (IKETGYSILGFVAYVPLFIAL), 71–91 (WLGFFHAFGWITFIGVIIGYI), 128–148 (IGFLAYPWGLAAFTVNNFNNL), 151–171 (IADIFGVFFVSFAVYFLNSGI), and 182–202 (NLLNIAFPTLLITASFTYGMI). A CN hydrolase domain is found at 218 to 472 (LNIAAIQLNT…KGYLLSTVKL (255 aa)). Residue E263 is the Proton acceptor of the active site. The active site involves K331. The active-site Nucleophile is C383.

Belongs to the CN hydrolase family. Apolipoprotein N-acyltransferase subfamily.

It is found in the cell inner membrane. The catalysed reaction is N-terminal S-1,2-diacyl-sn-glyceryl-L-cysteinyl-[lipoprotein] + a glycerophospholipid = N-acyl-S-1,2-diacyl-sn-glyceryl-L-cysteinyl-[lipoprotein] + a 2-acyl-sn-glycero-3-phospholipid + H(+). Its pathway is protein modification; lipoprotein biosynthesis (N-acyl transfer). Functionally, catalyzes the phospholipid dependent N-acylation of the N-terminal cysteine of apolipoprotein, the last step in lipoprotein maturation. The sequence is that of Apolipoprotein N-acyltransferase from Borreliella burgdorferi (strain ATCC 35210 / DSM 4680 / CIP 102532 / B31) (Borrelia burgdorferi).